We begin with the raw amino-acid sequence, 205 residues long: Heat shock protein beta-11 (205 aa).

One can recognise a sHSP domain in the interval 67-180 (VSPMTTFKPI…NERVIPITYT (114 aa)). The interval 184 to 205 (KNPALQNSEPENQAVEAEAAEN) is disordered. Positions 192–205 (EPENQAVEAEAAEN) are enriched in low complexity.

It belongs to the small heat shock protein (HSP20) family. In terms of tissue distribution, expressed specifically in the rostral-most somites at 24 hpf. At 48 hpf, expression continues in the rostral-most somites and also in the notochord. Somite expression was restricted to the vicinity of the horizontal myoseptum. In adults, expressed in the heart.

The polypeptide is Heat shock protein beta-11 (hspb11) (Danio rerio (Zebrafish)).